The chain runs to 897 residues: 4-hydroxyphenylacetate decarboxylase glycyl radical subunit (897 aa).

The region spanning 35-770 is the PFL domain; the sequence is ESTQKLMDIY…VTLATADGRL (736 aa). 4-hydroxyphenylacetate-binding residues include Ser-344 and Cys-503. The Cysteine radical intermediate role is filled by Cys-503. The active-site Proton donor is Glu-505. Residues His-536 and Glu-637 each contribute to the 4-hydroxyphenylacetate site. The Glycine radical domain occupies 778-897; sequence GSVSAAAGTD…EVIYRTEYDK (120 aa). Residue Gly-873 is modified to Glycine radical.

It belongs to the glycyl radical enzyme (GRE) family. HPAD subfamily. As to quaternary structure, heterooctamer consisting of 4 large (HpdB) subunits and 4 small (HpdC) subunits, arranged as a tetramer of heterodimers. Also forms a catalytically inactive homodimer. Post-translationally, requires the activating protein CsdA to generate the key active site glycyl radical that is involved in catalysis. Phosphorylated on serine. Phosphorylation may trigger the formation of the active heterooctamers and thereby regulates enzyme activity.

It catalyses the reaction 4-hydroxyphenylacetate + H(+) = 4-methylphenol + CO2. The catalysed reaction is 3,4-dihydroxyphenylacetate + H(+) = 4-methylcatechol + CO2. Functionally, glycyl radical subunit of the HPA decarboxylase that decarboxylates phenylacetates with a hydroxyl group in the p-position. Active toward 4-hydroxyphenylacetate and 3,4-dihydroxyphenylacetate, forming 4-methylphenol and 4-methylcatechol, respectively. Is likely involved in the catabolism of aromatic amino acids such as tyrosine fermentation. 4-methylphenol (p-cresol) formation provides metabolic toxicity, which allows an active suppression of other microbes and may provide growth advantages for the producers in highly competitive environments. The large subunit is the catalytic subunit that binds the substrate. This Clostridium scatologenes protein is 4-hydroxyphenylacetate decarboxylase glycyl radical subunit.